The sequence spans 381 residues: Succinyl-diaminopimelate desuccinylase 1 (381 aa).

H70 contributes to the Zn(2+) binding site. Residue D72 is part of the active site. Zn(2+) is bound at residue D103. E136 acts as the Proton acceptor in catalysis. The Zn(2+) site is built by E137, E165, and H354.

This sequence belongs to the peptidase M20A family. DapE subfamily. As to quaternary structure, homodimer. Zn(2+) serves as cofactor. It depends on Co(2+) as a cofactor.

The enzyme catalyses N-succinyl-(2S,6S)-2,6-diaminopimelate + H2O = (2S,6S)-2,6-diaminopimelate + succinate. It functions in the pathway amino-acid biosynthesis; L-lysine biosynthesis via DAP pathway; LL-2,6-diaminopimelate from (S)-tetrahydrodipicolinate (succinylase route): step 3/3. Catalyzes the hydrolysis of N-succinyl-L,L-diaminopimelic acid (SDAP), forming succinate and LL-2,6-diaminopimelate (DAP), an intermediate involved in the bacterial biosynthesis of lysine and meso-diaminopimelic acid, an essential component of bacterial cell walls. In Ruegeria sp. (strain TM1040) (Silicibacter sp.), this protein is Succinyl-diaminopimelate desuccinylase 1.